The chain runs to 336 residues: Dihydroorotate dehydrogenase (quinone) (336 aa).

FMN-binding positions include 62–66 (AGLDK) and threonine 86. Lysine 66 contributes to the substrate binding site. Residue 111 to 115 (NRMGF) coordinates substrate. FMN-binding residues include asparagine 139 and asparagine 172. A substrate-binding site is contributed by asparagine 172. Serine 175 (nucleophile) is an active-site residue. Asparagine 177 contacts substrate. Positions 217 and 245 each coordinate FMN. 246–247 (NT) contributes to the substrate binding site. Residues glycine 268, glycine 297, and 318 to 319 (YS) each bind FMN.

It belongs to the dihydroorotate dehydrogenase family. Type 2 subfamily. As to quaternary structure, monomer. The cofactor is FMN.

It is found in the cell membrane. The enzyme catalyses (S)-dihydroorotate + a quinone = orotate + a quinol. It functions in the pathway pyrimidine metabolism; UMP biosynthesis via de novo pathway; orotate from (S)-dihydroorotate (quinone route): step 1/1. Catalyzes the conversion of dihydroorotate to orotate with quinone as electron acceptor. This Klebsiella pneumoniae (strain 342) protein is Dihydroorotate dehydrogenase (quinone).